Reading from the N-terminus, the 189-residue chain is Crossover junction endodeoxyribonuclease RuvC (189 aa).

Residues D8, E67, and D139 contribute to the active site. Mg(2+)-binding residues include D8, E67, and D139.

This sequence belongs to the RuvC family. In terms of assembly, homodimer which binds Holliday junction (HJ) DNA. The HJ becomes 2-fold symmetrical on binding to RuvC with unstacked arms; it has a different conformation from HJ DNA in complex with RuvA. In the full resolvosome a probable DNA-RuvA(4)-RuvB(12)-RuvC(2) complex forms which resolves the HJ. The cofactor is Mg(2+).

The protein resides in the cytoplasm. The enzyme catalyses Endonucleolytic cleavage at a junction such as a reciprocal single-stranded crossover between two homologous DNA duplexes (Holliday junction).. In terms of biological role, the RuvA-RuvB-RuvC complex processes Holliday junction (HJ) DNA during genetic recombination and DNA repair. Endonuclease that resolves HJ intermediates. Cleaves cruciform DNA by making single-stranded nicks across the HJ at symmetrical positions within the homologous arms, yielding a 5'-phosphate and a 3'-hydroxyl group; requires a central core of homology in the junction. The consensus cleavage sequence is 5'-(A/T)TT(C/G)-3'. Cleavage occurs on the 3'-side of the TT dinucleotide at the point of strand exchange. HJ branch migration catalyzed by RuvA-RuvB allows RuvC to scan DNA until it finds its consensus sequence, where it cleaves and resolves the cruciform DNA. This Histophilus somni (strain 129Pt) (Haemophilus somnus) protein is Crossover junction endodeoxyribonuclease RuvC.